Reading from the N-terminus, the 209-residue chain is Ribosomal RNA large subunit methyltransferase E (209 aa).

5 residues coordinate S-adenosyl-L-methionine: Gly63, Trp65, Asp83, Asp99, and Asp124. Lys164 acts as the Proton acceptor in catalysis.

This sequence belongs to the class I-like SAM-binding methyltransferase superfamily. RNA methyltransferase RlmE family.

It is found in the cytoplasm. It carries out the reaction uridine(2552) in 23S rRNA + S-adenosyl-L-methionine = 2'-O-methyluridine(2552) in 23S rRNA + S-adenosyl-L-homocysteine + H(+). Its function is as follows. Specifically methylates the uridine in position 2552 of 23S rRNA at the 2'-O position of the ribose in the fully assembled 50S ribosomal subunit. The polypeptide is Ribosomal RNA large subunit methyltransferase E (Shewanella piezotolerans (strain WP3 / JCM 13877)).